A 311-amino-acid polypeptide reads, in one-letter code: Olfactory receptor 8B8 (311 aa).

Over 1–25 (MAAENSSFVTQFILAGLTDQPGVQI) the chain is Extracellular. Residue asparagine 5 is glycosylated (N-linked (GlcNAc...) asparagine). Residues 26-46 (PLFFLFLGFYVVTVVGNLGLI) traverse the membrane as a helical segment. Topologically, residues 47-54 (TLIRLNSH) are cytoplasmic. Residues 55 to 75 (LHTPMYFFLYNLSFIDFCYSS) traverse the membrane as a helical segment. The Extracellular segment spans residues 76–99 (VITPKMLMSFVLKKNSISYAGCMT). Residues cysteine 97 and cysteine 189 are joined by a disulfide bond. Residues 100-120 (QLFFFLFFVVSESFILSAMAY) form a helical membrane-spanning segment. The Cytoplasmic segment spans residues 121–139 (DRYVAICNPLLYMVTMSPQ). The chain crosses the membrane as a helical span at residues 140-160 (VCFLLLLGVYGMGFAGAMAHT). Residues 161 to 197 (ACMMGVTFCANNLVNHYMCDILPLLECACTSTYVNEL) are Extracellular-facing. The helical transmembrane segment at 198–217 (VVFVVVGIDIGVPTVTIFIS) threads the bilayer. Residues 218–237 (YALILSSIFHIDSTEGRSKA) lie on the Cytoplasmic side of the membrane. Residues 238–258 (FSTCSSHIIAVSLFFGSGAFM) traverse the membrane as a helical segment. At 259–271 (YLKPFSLLAMNQG) the chain is on the extracellular side. A helical transmembrane segment spans residues 272–292 (KVSSLFYTTVVPMLNPLIYSL). Residues 293–311 (RNKDVKVALKKILNKNAFS) lie on the Cytoplasmic side of the membrane.

Belongs to the G-protein coupled receptor 1 family. In terms of tissue distribution, expressed in the tongue and testis.

The protein resides in the cell membrane. In terms of biological role, odorant receptor (Potential). May be involved in taste perception. In Homo sapiens (Human), this protein is Olfactory receptor 8B8.